The chain runs to 334 residues: Glycerol-3-phosphate dehydrogenase [NAD(P)+] (334 aa).

3 residues coordinate NADPH: Trp13, Arg33, and Lys106. The sn-glycerol 3-phosphate site is built by Lys106, Gly137, and Ser139. Ala141 provides a ligand contact to NADPH. Sn-glycerol 3-phosphate contacts are provided by Lys192, Asp245, Ser255, Arg256, and Asn257. Lys192 serves as the catalytic Proton acceptor. Arg256 is an NADPH binding site. The NADPH site is built by Val280 and Glu282.

Belongs to the NAD-dependent glycerol-3-phosphate dehydrogenase family.

It is found in the cytoplasm. It catalyses the reaction sn-glycerol 3-phosphate + NAD(+) = dihydroxyacetone phosphate + NADH + H(+). The catalysed reaction is sn-glycerol 3-phosphate + NADP(+) = dihydroxyacetone phosphate + NADPH + H(+). It functions in the pathway membrane lipid metabolism; glycerophospholipid metabolism. Its function is as follows. Catalyzes the reduction of the glycolytic intermediate dihydroxyacetone phosphate (DHAP) to sn-glycerol 3-phosphate (G3P), the key precursor for phospholipid synthesis. In Chlamydia caviae (strain ATCC VR-813 / DSM 19441 / 03DC25 / GPIC) (Chlamydophila caviae), this protein is Glycerol-3-phosphate dehydrogenase [NAD(P)+].